Here is a 48-residue protein sequence, read N- to C-terminus: Putative ATP synthase protein 8-like protein (48 aa).

A helical transmembrane segment spans residues 17-37; sequence GFLVILLTLLLLSYAFLSMIL.

This sequence belongs to the ATPase protein 8 family.

The protein localises to the membrane. This chain is Putative ATP synthase protein 8-like protein, found in Eremothecium gossypii (strain ATCC 10895 / CBS 109.51 / FGSC 9923 / NRRL Y-1056) (Yeast).